The chain runs to 522 residues: Ribonuclease Y (522 aa).

The chain crosses the membrane as a helical span at residues 2–22; sequence WVEILVGSSAAIISGAAGYLL. Residues 212 to 278 enclose the KH domain; the sequence is LINTVSIPSE…TKVIELLVED (67 aa). Residues 338–431 form the HD domain; it reads ALGHSLEVAH…VCAADTLSAA (94 aa).

It belongs to the RNase Y family.

It localises to the cell membrane. Endoribonuclease that initiates mRNA decay. This Nitratiruptor sp. (strain SB155-2) protein is Ribonuclease Y.